Reading from the N-terminus, the 865-residue chain is Armadillo repeat-containing protein 2 (865 aa).

2 disordered regions span residues 39–75 (TVRT…FSVH) and 214–243 (SVPF…DQSR). The segment covering 60–75 (SSRTPENRPPSSFSVH) has biased composition (polar residues). ARM repeat units follow at residues 261-300 (IEVD…HALE), 303-343 (NMLG…ALKV), 362-402 (EKND…TIKF), 407-448 (PEFL…HLLV), 461-502 (PLAR…KLTS), 505-546 (DCCV…NLTA), 550-587 (QARE…GEGD), 589-614 (RPEA…NLAI), 617-660 (GVGP…NLSY), 662-703 (KVKN…NLSQ), 705-744 (HDIC…NLTV), and 746-788 (RDKR…NFSE).

Functionally, required for sperm flagellum axoneme organization and function. Involved in axonemal central pair complex assembly and/or stability. This is Armadillo repeat-containing protein 2 from Bos taurus (Bovine).